A 142-amino-acid chain; its full sequence is Sorting nexin-3 (142 aa).

In terms of domain architecture, PX spans 21–138 (NFLEIEVRNP…AAFVQDPNWD (118 aa)). 5 residues coordinate a 1,2-diacyl-sn-glycero-3-phospho-(1D-myo-inositol-3-phosphate): R64, S66, K90, R95, and R104.

The protein belongs to the sorting nexin family.

The protein localises to the cytoplasm. It is found in the golgi apparatus membrane. It localises to the prevacuolar compartment membrane. Functionally, required for retention of late Golgi membrane proteins. Component of the retrieval machinery that functions by direct interaction with the cytosolic tails of certain TGN membrane proteins during the sorting/budding process at the prevacuolar compartment. Binds phosphatidylinositol 3-phosphate (PtdIns(P3)). In Neurospora crassa (strain ATCC 24698 / 74-OR23-1A / CBS 708.71 / DSM 1257 / FGSC 987), this protein is Sorting nexin-3 (snx-3).